The chain runs to 273 residues: WIMGHMVNAIAQIDEFVNLGANSIETDVSFDKNANPEYTYHGIPCDCGRTCTKWEYFNTFLGGLRKATTPGDSKYHEKLVLVVFDLKTGSLYDNQAYDAGTKLAKSLLQNYWNKGNNGGRAYIVLSIPNLDHYKLITGFKETLTKEEHPELMDKVGYDFSGNDDIGDVAKAYKKAGVTGHVWQSDGITNCLLRGLDRVRKAVANRDSSNGYINKVYYWTVDKRASTRDALDAGVDGIMTNYPDVIADVLGESAYTAKFRIATYDDNPWETFKN.

Histidine 5 is an active-site residue. The Mg(2+) site is built by glutamate 25 and aspartate 27. Histidine 41 serves as the catalytic Nucleophile. 2 disulfides stabilise this stretch: cysteine 45–cysteine 51 and cysteine 47–cysteine 190. Mg(2+) is bound at residue aspartate 85.

It belongs to the arthropod phospholipase D family. Class II subfamily. Mg(2+) is required as a cofactor. As to expression, expressed by the venom gland.

The protein resides in the secreted. It catalyses the reaction an N-(acyl)-sphingosylphosphocholine = an N-(acyl)-sphingosyl-1,3-cyclic phosphate + choline. The enzyme catalyses an N-(acyl)-sphingosylphosphoethanolamine = an N-(acyl)-sphingosyl-1,3-cyclic phosphate + ethanolamine. The catalysed reaction is a 1-acyl-sn-glycero-3-phosphocholine = a 1-acyl-sn-glycero-2,3-cyclic phosphate + choline. It carries out the reaction a 1-acyl-sn-glycero-3-phosphoethanolamine = a 1-acyl-sn-glycero-2,3-cyclic phosphate + ethanolamine. In terms of biological role, dermonecrotic toxins cleave the phosphodiester linkage between the phosphate and headgroup of certain phospholipids (sphingolipid and lysolipid substrates), forming an alcohol (often choline) and a cyclic phosphate. This toxin acts on sphingomyelin (SM). It may also act on ceramide phosphoethanolamine (CPE), lysophosphatidylcholine (LPC) and lysophosphatidylethanolamine (LPE), but not on lysophosphatidylserine (LPS), and lysophosphatidylglycerol (LPG). It acts by transphosphatidylation, releasing exclusively cyclic phosphate products as second products. Induces dermonecrosis, hemolysis, increased vascular permeability, edema, inflammatory response, and platelet aggregation. In Loxosceles sabina (Tucson recluse spider), this protein is Dermonecrotic toxin LsaSicTox-alphaIB1avi.